The following is a 357-amino-acid chain: DNA replication and repair protein RecF (357 aa).

Gly30 to Thr37 provides a ligand contact to ATP.

Belongs to the RecF family.

It is found in the cytoplasm. In terms of biological role, the RecF protein is involved in DNA metabolism; it is required for DNA replication and normal SOS inducibility. RecF binds preferentially to single-stranded, linear DNA. It also seems to bind ATP. The protein is DNA replication and repair protein RecF of Salmonella schwarzengrund (strain CVM19633).